The following is a 260-amino-acid chain: MLKRRIIPCLDVTAGRVVKGVQFLDLRDAGDPVELAARYDAEGADELVFLDITASAEGRETMVEVVRRTAKEVFIPLTVGGGVRTPADMYRLLRAGADKVSVNTAAVLDPDLIRVCAQRFGSQCVVLAIDARRRPEGGWEVYTHGGRRPTGLDVIEWAKQGVSLGAGEILLTSMDTDGTQQGYDLALLRAVVDAVGVPVIASGGAGTLEHLYQALTMGGAHAVLAASIFHFGRYSVAEAKRYLAARGVPVRHVSVEFTPS.

Active-site residues include aspartate 11 and aspartate 130.

This sequence belongs to the HisA/HisF family. Heterodimer of HisH and HisF.

The protein resides in the cytoplasm. It catalyses the reaction 5-[(5-phospho-1-deoxy-D-ribulos-1-ylimino)methylamino]-1-(5-phospho-beta-D-ribosyl)imidazole-4-carboxamide + L-glutamine = D-erythro-1-(imidazol-4-yl)glycerol 3-phosphate + 5-amino-1-(5-phospho-beta-D-ribosyl)imidazole-4-carboxamide + L-glutamate + H(+). It functions in the pathway amino-acid biosynthesis; L-histidine biosynthesis; L-histidine from 5-phospho-alpha-D-ribose 1-diphosphate: step 5/9. In terms of biological role, IGPS catalyzes the conversion of PRFAR and glutamine to IGP, AICAR and glutamate. The HisF subunit catalyzes the cyclization activity that produces IGP and AICAR from PRFAR using the ammonia provided by the HisH subunit. The sequence is that of Imidazole glycerol phosphate synthase subunit HisF from Thermomicrobium roseum (strain ATCC 27502 / DSM 5159 / P-2).